Reading from the N-terminus, the 371-residue chain is Peptide chain release factor 2 (371 aa).

The residue at position 253 (Gln-253) is an N5-methylglutamine.

It belongs to the prokaryotic/mitochondrial release factor family. In terms of processing, methylated by PrmC. Methylation increases the termination efficiency of RF2.

Its subcellular location is the cytoplasm. Its function is as follows. Peptide chain release factor 2 directs the termination of translation in response to the peptide chain termination codons UGA and UAA. The polypeptide is Peptide chain release factor 2 (Mycobacterium marinum (strain ATCC BAA-535 / M)).